The sequence spans 397 residues: CCA-adding enzyme (397 aa).

Positions 26 and 29 each coordinate ATP. Positions 26 and 29 each coordinate CTP. The Mg(2+) site is built by Asp-39 and Asp-41. Arg-110, Asp-153, Arg-156, Arg-159, and Arg-162 together coordinate ATP. CTP contacts are provided by Arg-110, Asp-153, Arg-156, Arg-159, and Arg-162.

It belongs to the tRNA nucleotidyltransferase/poly(A) polymerase family. Bacterial CCA-adding enzyme type 3 subfamily. As to quaternary structure, homodimer. It depends on Mg(2+) as a cofactor.

It carries out the reaction a tRNA precursor + 2 CTP + ATP = a tRNA with a 3' CCA end + 3 diphosphate. The enzyme catalyses a tRNA with a 3' CCA end + 2 CTP + ATP = a tRNA with a 3' CCACCA end + 3 diphosphate. Functionally, catalyzes the addition and repair of the essential 3'-terminal CCA sequence in tRNAs without using a nucleic acid template. Adds these three nucleotides in the order of C, C, and A to the tRNA nucleotide-73, using CTP and ATP as substrates and producing inorganic pyrophosphate. tRNA 3'-terminal CCA addition is required both for tRNA processing and repair. Also involved in tRNA surveillance by mediating tandem CCA addition to generate a CCACCA at the 3' terminus of unstable tRNAs. While stable tRNAs receive only 3'-terminal CCA, unstable tRNAs are marked with CCACCA and rapidly degraded. This Bacillus cereus (strain AH187) protein is CCA-adding enzyme.